The sequence spans 417 residues: Glutamyl-tRNA reductase (417 aa).

Substrate-binding positions include Thr49–Arg52, Ser105, Glu110–Gln112, and Gln116. Residue Cys50 is the Nucleophile of the active site. Gly185–Ile190 provides a ligand contact to NADP(+).

It belongs to the glutamyl-tRNA reductase family. Homodimer.

The catalysed reaction is (S)-4-amino-5-oxopentanoate + tRNA(Glu) + NADP(+) = L-glutamyl-tRNA(Glu) + NADPH + H(+). It participates in porphyrin-containing compound metabolism; protoporphyrin-IX biosynthesis; 5-aminolevulinate from L-glutamyl-tRNA(Glu): step 1/2. Functionally, catalyzes the NADPH-dependent reduction of glutamyl-tRNA(Glu) to glutamate 1-semialdehyde (GSA). This chain is Glutamyl-tRNA reductase, found in Chromobacterium violaceum (strain ATCC 12472 / DSM 30191 / JCM 1249 / CCUG 213 / NBRC 12614 / NCIMB 9131 / NCTC 9757 / MK).